A 361-amino-acid chain; its full sequence is Divinyl chlorophyll a/b light-harvesting protein PcbE (361 aa).

6 helical membrane passes run 27–47 (FIGS…ANTL), 88–108 (VAFV…AGLL), 149–169 (FILG…VEWA), 210–230 (VMGG…FHIA), 250–270 (AVLS…AFWC), and 315–335 (LSNV…WHAI).

This sequence belongs to the PsbB/PsbC family. IsiA/Pcb subfamily. In terms of assembly, the antenna complex consists of divinyl chlorophylls (a and b) and divinyl chlorophyll a/b binding proteins and binds more divinyl chlorophyll b than does the antenna complex from high-light-adapted Prochlorococcus. Divinyl chlorophyll a is required as a cofactor. The cofactor is divinyl chlorophyll b.

It is found in the cellular thylakoid membrane. The antenna complex functions as a light receptor, it captures and delivers excitation energy to photosystems II and I. The Prochlorales pcb genes are not related to higher plant LHCs. The protein is Divinyl chlorophyll a/b light-harvesting protein PcbE (pcbE) of Prochlorococcus marinus (strain SARG / CCMP1375 / SS120).